Reading from the N-terminus, the 173-residue chain is Large ribosomal subunit protein bL9 (173 aa).

This sequence belongs to the bacterial ribosomal protein bL9 family.

Functionally, binds to the 23S rRNA. The protein is Large ribosomal subunit protein bL9 of Rickettsia bellii (strain OSU 85-389).